The primary structure comprises 433 residues: Chaperone SurA (433 aa).

Residues 1 to 28 (MTAITRITLTGALLAAALLLAALQPARA) form the signal peptide. PpiC domains follow at residues 174-277 (NQEY…KLMD) and 286-386 (VTET…QVTD).

It localises to the periplasm. The catalysed reaction is [protein]-peptidylproline (omega=180) = [protein]-peptidylproline (omega=0). Its function is as follows. Chaperone involved in the correct folding and assembly of outer membrane proteins. Recognizes specific patterns of aromatic residues and the orientation of their side chains, which are found more frequently in integral outer membrane proteins. May act in both early periplasmic and late outer membrane-associated steps of protein maturation. This is Chaperone SurA from Alkalilimnicola ehrlichii (strain ATCC BAA-1101 / DSM 17681 / MLHE-1).